We begin with the raw amino-acid sequence, 85 residues long: Large ribosomal subunit protein bL27 (85 aa).

A disordered region spans residues 1–21 (MAHKKAGGSTRNGRDSRGKRL).

This sequence belongs to the bacterial ribosomal protein bL27 family.

This Blochmanniella floridana protein is Large ribosomal subunit protein bL27.